The sequence spans 300 residues: Mitochondrial carnitine/acylcarnitine carrier-like protein (300 aa).

Solcar repeat units lie at residues 2 to 93 (ADAW…MEGL), 102 to 201 (LTIS…FKRF), and 211 to 298 (LGQG…TRSS). The next 6 membrane-spanning stretches (helical) occupy residues 8 to 28 (LASG…FDTI), 64 to 84 (GLYK…AVLF), 108 to 128 (FVAG…TELI), 176 to 195 (GLFP…FAAY), 211 to 231 (LGQG…WGIV), and 273 to 292 (GFGP…FLAY).

The protein belongs to the mitochondrial carrier (TC 2.A.29) family. High expression in cotyledons, leaves, flowers and developing siliques. Lower expression in roots and maturing siliques. Not detected in meristematic tissues.

The protein localises to the mitochondrion inner membrane. Functionally, involved in photorespiratory metabolism. Acts probably as a carrier for a glycine decarboxylase (GDC) cofactor or, alternatively, may act as a mitochondrial glycine shuttle. Involved in the transition from the embryonic stage to the juvenile autotrophic stage. In Arabidopsis thaliana (Mouse-ear cress), this protein is Mitochondrial carnitine/acylcarnitine carrier-like protein (BOU).